Reading from the N-terminus, the 354-residue chain is Fructose-bisphosphate aldolase (354 aa).

Serine 61 serves as a coordination point for D-glyceraldehyde 3-phosphate. Residue aspartate 104 is the Proton donor of the active site. Positions 105, 139, 169, and 221 each coordinate Zn(2+). Dihydroxyacetone phosphate is bound at residue glycine 222. Histidine 260 lines the Zn(2+) pocket. Dihydroxyacetone phosphate is bound by residues 261–263 (GGS) and 282–285 (NIDT).

The protein belongs to the class II fructose-bisphosphate aldolase family. In terms of assembly, homodimer. The cofactor is Zn(2+).

The enzyme catalyses beta-D-fructose 1,6-bisphosphate = D-glyceraldehyde 3-phosphate + dihydroxyacetone phosphate. It functions in the pathway carbohydrate degradation; glycolysis; D-glyceraldehyde 3-phosphate and glycerone phosphate from D-glucose: step 4/4. Functionally, catalyzes the aldol condensation of dihydroxyacetone phosphate (DHAP or glycerone-phosphate) with glyceraldehyde 3-phosphate (G3P) to form fructose 1,6-bisphosphate (FBP) in gluconeogenesis and the reverse reaction in glycolysis. The polypeptide is Fructose-bisphosphate aldolase (fba) (Campylobacter jejuni subsp. jejuni serotype O:2 (strain ATCC 700819 / NCTC 11168)).